Reading from the N-terminus, the 1795-residue chain is Putative surface cell antigen sca2 (1795 aa).

The first 33 residues, 1-33, serve as a signal peptide directing secretion; it reads MNLQNSHSKKYVLTFFMSTCLLTSSFLSTSARA. The segment covering 360–373 has biased composition (polar residues); it reads FLNNNDTTKPSTGR. Disordered stretches follow at residues 360–391, 664–709, and 1354–1441; these read FLNNNDTTKPSTGRSQKKSGSKNDHWYMSNQS, LEQT…SSNS, and KQEN…DEEL. Residues 672–700 show a composition bias toward pro residues; sequence PNPPPLPLNGGIPNPPPLPLNGSMPPPPL. Composition is skewed to basic and acidic residues over residues 1364–1383 and 1398–1409; these read SSTKDDTQPEDSNKKSEQSD and SKNDKSSDDKKS. Acidic residues predominate over residues 1417-1432; sequence DEDDTGYATDEEELEE. The Autotransporter domain occupies 1516-1795; the sequence is ETSINRGVWI…QGLIKLKVNL (280 aa).

It localises to the cell outer membrane. The sequence is that of Putative surface cell antigen sca2 (sca2) from Rickettsia conorii (strain ATCC VR-613 / Malish 7).